The primary structure comprises 156 residues: Small ribosomal subunit protein uS7 (156 aa).

The protein belongs to the universal ribosomal protein uS7 family. As to quaternary structure, part of the 30S ribosomal subunit. Contacts proteins S9 and S11.

Its function is as follows. One of the primary rRNA binding proteins, it binds directly to 16S rRNA where it nucleates assembly of the head domain of the 30S subunit. Is located at the subunit interface close to the decoding center, probably blocks exit of the E-site tRNA. This Synechococcus elongatus (strain ATCC 33912 / PCC 7942 / FACHB-805) (Anacystis nidulans R2) protein is Small ribosomal subunit protein uS7.